Reading from the N-terminus, the 62-residue chain is uncharacterized protein (62 aa).

The next 2 helical transmembrane spans lie at 7-27 (LLLL…VFIA) and 34-51 (IIAS…GFTL).

The protein localises to the cell membrane. This is an uncharacterized protein from Bacillus subtilis (strain 168).